The primary structure comprises 91 residues: UPF0213 protein NGO_1598 (91 aa).

The GIY-YIG domain occupies 4–83 (SNWSVYLILC…AAQKRQLWEQ (80 aa)).

Belongs to the UPF0213 family.

The chain is UPF0213 protein NGO_1598 from Neisseria gonorrhoeae (strain ATCC 700825 / FA 1090).